A 100-amino-acid polypeptide reads, in one-letter code: MFAIFQTGGKQYKVQQGEKIYVEKLDLEVGSKISFDQVIMVEGSVGTPFVKNAVVNATVIKQGKQKKINIIKFKSKKHHLKRQGHRQPYTQLVIDSISVK.

Belongs to the bacterial ribosomal protein bL21 family. As to quaternary structure, part of the 50S ribosomal subunit. Contacts protein L20.

Functionally, this protein binds to 23S rRNA in the presence of protein L20. The chain is Large ribosomal subunit protein bL21 from Ureaplasma parvum serovar 3 (strain ATCC 27815 / 27 / NCTC 11736).